Here is a 158-residue protein sequence, read N- to C-terminus: S-ribosylhomocysteine lyase (158 aa).

Fe cation-binding residues include H56, H60, and C125.

It belongs to the LuxS family. In terms of assembly, homodimer. It depends on Fe cation as a cofactor.

It catalyses the reaction S-(5-deoxy-D-ribos-5-yl)-L-homocysteine = (S)-4,5-dihydroxypentane-2,3-dione + L-homocysteine. Involved in the synthesis of autoinducer 2 (AI-2) which is secreted by bacteria and is used to communicate both the cell density and the metabolic potential of the environment. The regulation of gene expression in response to changes in cell density is called quorum sensing. Catalyzes the transformation of S-ribosylhomocysteine (RHC) to homocysteine (HC) and 4,5-dihydroxy-2,3-pentadione (DPD). The sequence is that of S-ribosylhomocysteine lyase from Leuconostoc mesenteroides subsp. mesenteroides (strain ATCC 8293 / DSM 20343 / BCRC 11652 / CCM 1803 / JCM 6124 / NCDO 523 / NBRC 100496 / NCIMB 8023 / NCTC 12954 / NRRL B-1118 / 37Y).